The sequence spans 172 residues: Stellate protein CG33243 (172 aa).

Belongs to the casein kinase 2 subunit beta family. In terms of assembly, interacts in vitro with the casein kinase 2 alpha subunit (CkII-alpha). The relevance of such interaction is however unclear in vivo. Probably not expressed in wild-type flies. In males lacking the Y chromosome, it is testis-specific and constitutes the main component of star-shaped crystals.

Unknown. In males lacking the Y chromosome, its strong overexpression leads to the appearance of proteinaceous star-shaped crystals in the primary spermatocytes causing meiotic drive, possibly by interfering with normal casein kinase 2 activity. The chain is Stellate protein CG33243 (Ste:CG33243) from Drosophila melanogaster (Fruit fly).